Here is an 838-residue protein sequence, read N- to C-terminus: Multiphosphoryl transfer protein (838 aa).

Residues 7 to 147 (APVTPDLVRL…AVIVAALTGD (141 aa)) form the PTS EIIA type-2 domain. Residue H67 is the Tele-phosphohistidine intermediate; for EIIA activity of the active site. H67 is subject to Phosphohistidine; by HPr. One can recognise an HPr domain in the interval 161-253 (AERFEWTIAY…LTAQEKADAE (93 aa)). H175 functions as the Pros-phosphohistidine intermediate; for HPr activity in the catalytic mechanism. At H175 the chain carries Phosphohistidine; by EI. A PTS EI region spans residues 274–838 (AIVGIGASPG…ALEAQREGQA (565 aa)). The active-site Tele-phosphohistidine intermediate; for PTS EI activity is the H460. H460 is modified (phosphohistidine; by autocatalysis). Positions 567 and 603 each coordinate phosphoenolpyruvate. Residues E697 and D721 each contribute to the Mg(2+) site. Residues 720-721 (ND) and R731 contribute to the phosphoenolpyruvate site. The active-site Proton donor is C768.

The protein belongs to the PEP-utilizing enzyme family. Requires Mg(2+) as cofactor.

The protein localises to the cytoplasm. It carries out the reaction L-histidyl-[protein] + phosphoenolpyruvate = N(pros)-phospho-L-histidyl-[protein] + pyruvate. The phosphoenolpyruvate-dependent sugar phosphotransferase system (sugar PTS), a major carbohydrate active transport system, catalyzes the phosphorylation of incoming sugar substrates concomitantly with their translocation across the cell membrane. The enzyme II FruAB PTS system is involved in fructose transport. The sequence is that of Multiphosphoryl transfer protein from Xanthomonas campestris pv. campestris (strain ATCC 33913 / DSM 3586 / NCPPB 528 / LMG 568 / P 25).